The following is a 277-amino-acid chain: Undecaprenyl-diphosphatase (277 aa).

Helical transmembrane passes span 3–23 (IVLL…EFLP), 43–63 (VGKV…ILVY), 85–105 (LNVL…GKAI), 109–129 (LFTP…ILWA), 189–209 (TDFS…YSLF), 218–238 (ADLP…WLCI), and 249–269 (SFVG…ATAW).

The protein belongs to the UppP family.

It is found in the cell inner membrane. It catalyses the reaction di-trans,octa-cis-undecaprenyl diphosphate + H2O = di-trans,octa-cis-undecaprenyl phosphate + phosphate + H(+). In terms of biological role, catalyzes the dephosphorylation of undecaprenyl diphosphate (UPP). Confers resistance to bacitracin. This Albidiferax ferrireducens (strain ATCC BAA-621 / DSM 15236 / T118) (Rhodoferax ferrireducens) protein is Undecaprenyl-diphosphatase.